We begin with the raw amino-acid sequence, 298 residues long: MPDDSRISPLDQARILSEALPHMQRYDEETIVIKYGGHAMGSENVARQFASDIVLLEQTAINPVVVHGGGPQIAAMLQRLGIKSEFAAGLRITDAATIEIVEMVLAGSINKQLVGYINEAGGKAVGLCGKDGNMVTAAKATRMLADPDSNIEKVVDLGFVGEPEKVDLTLLNQLIGHELIPVLAPLATSKGGQTFNVNADIFAGAVAGALKAKRLLLLTDVPGVLDKSKKLIPELSISDARKLIADGTISGGMIPKVETCIYALEQGVSGVVIIDGKTPHAVLLELFTNQGTGTLIHK.

Residues 69–70 (GG), arginine 91, and asparagine 196 each bind substrate.

This sequence belongs to the acetylglutamate kinase family. ArgB subfamily.

Its subcellular location is the cytoplasm. The enzyme catalyses N-acetyl-L-glutamate + ATP = N-acetyl-L-glutamyl 5-phosphate + ADP. It participates in amino-acid biosynthesis; L-arginine biosynthesis; N(2)-acetyl-L-ornithine from L-glutamate: step 2/4. In terms of biological role, catalyzes the ATP-dependent phosphorylation of N-acetyl-L-glutamate. This Nitrobacter winogradskyi (strain ATCC 25391 / DSM 10237 / CIP 104748 / NCIMB 11846 / Nb-255) protein is Acetylglutamate kinase.